The primary structure comprises 330 residues: tRNA U34 carboxymethyltransferase (330 aa).

Residues Lys91, Trp105, Lys110, Gly130, 152 to 154 (DPS), 181 to 182 (IE), Met196, Tyr200, and Arg315 each bind carboxy-S-adenosyl-L-methionine.

Belongs to the class I-like SAM-binding methyltransferase superfamily. CmoB family. In terms of assembly, homotetramer.

The enzyme catalyses carboxy-S-adenosyl-L-methionine + 5-hydroxyuridine(34) in tRNA = 5-carboxymethoxyuridine(34) in tRNA + S-adenosyl-L-homocysteine + H(+). Functionally, catalyzes carboxymethyl transfer from carboxy-S-adenosyl-L-methionine (Cx-SAM) to 5-hydroxyuridine (ho5U) to form 5-carboxymethoxyuridine (cmo5U) at position 34 in tRNAs. The protein is tRNA U34 carboxymethyltransferase of Shewanella pealeana (strain ATCC 700345 / ANG-SQ1).